Here is a 91-residue protein sequence, read N- to C-terminus: Small ribosomal subunit protein uS15 (91 aa).

It belongs to the universal ribosomal protein uS15 family. As to quaternary structure, part of the 30S ribosomal subunit. Forms a bridge to the 50S subunit in the 70S ribosome, contacting the 23S rRNA.

One of the primary rRNA binding proteins, it binds directly to 16S rRNA where it helps nucleate assembly of the platform of the 30S subunit by binding and bridging several RNA helices of the 16S rRNA. Functionally, forms an intersubunit bridge (bridge B4) with the 23S rRNA of the 50S subunit in the ribosome. The protein is Small ribosomal subunit protein uS15 of Legionella pneumophila (strain Paris).